Consider the following 365-residue polypeptide: Paraneoplastic antigen Ma2 homolog (365 aa).

At Ala-2 the chain carries N-acetylalanine. Residues 336-365 (EEEDAYFEQESREEPGEREGSGCWNNSRNN) are disordered. The span at 344–355 (QESREEPGEREG) shows a compositional bias: basic and acidic residues.

The protein belongs to the PNMA family. Expressed in the cerebrum, cerebellum and testis.

The protein localises to the nucleus. The protein resides in the nucleolus. The protein is Paraneoplastic antigen Ma2 homolog (Pnma2) of Mus musculus (Mouse).